Consider the following 511-residue polypeptide: U3 snoRNP-associated protein-like YAOH (511 aa).

Over residues 1-18 the composition is skewed to basic residues; that stretch reads MAPRPRKRVSRPKPRATS. Residues 1–117 are disordered; that stretch reads MAPRPRKRVS…EDEDEGEEAG (117 aa). Acidic residues-rich tracts occupy residues 44-53 and 66-80; these read EDIESEDSDL and DDGE…EQET. The segment covering 81–105 has biased composition (basic and acidic residues); it reads AGEKKMRIAKELLKKVTDAARRRRE. 7 WD repeats span residues 158–197, 217–256, 259–298, 301–339, 342–380, 412–451, and 457–497; these read KHRQ…SEKY, KRSK…HIQA, GHRG…YMNC, GHQN…QLLF, PATA…PTHI, SAQS…KGIR, and RLDG…QNGV.

This sequence belongs to the WD repeat RRP9 family.

It is found in the nucleus. The protein localises to the nucleolus. In terms of biological role, component of a nucleolar small nuclear ribonucleoprotein particle (snoRNP) thought to participate in the processing and modification of pre-ribosomal RNA. Essential for embryogenesis. In Oryza sativa subsp. japonica (Rice), this protein is U3 snoRNP-associated protein-like YAOH.